A 1392-amino-acid chain; its full sequence is DNA-directed RNA polymerase subunit beta (1392 aa).

The protein belongs to the RNA polymerase beta chain family. In terms of assembly, the RNAP catalytic core consists of 2 alpha, 1 beta, 1 beta' and 1 omega subunit. When a sigma factor is associated with the core the holoenzyme is formed, which can initiate transcription.

It catalyses the reaction RNA(n) + a ribonucleoside 5'-triphosphate = RNA(n+1) + diphosphate. In terms of biological role, DNA-dependent RNA polymerase catalyzes the transcription of DNA into RNA using the four ribonucleoside triphosphates as substrates. This chain is DNA-directed RNA polymerase subunit beta, found in Neisseria gonorrhoeae (strain NCCP11945).